A 775-amino-acid polypeptide reads, in one-letter code: 5-methyltetrahydropteroyltriglutamate--homocysteine methyltransferase (775 aa).

Residues 16–19 (REMK) and Lys115 contribute to the 5-methyltetrahydropteroyltri-L-glutamate site. L-homocysteine contacts are provided by residues 435 to 437 (IGS) and Glu488. L-methionine is bound by residues 435–437 (IGS) and Glu488. Residues 519–520 (RC) and Trp565 contribute to the 5-methyltetrahydropteroyltri-L-glutamate site. Asp603 is a binding site for L-homocysteine. Residue Asp603 participates in L-methionine binding. Glu609 contacts 5-methyltetrahydropteroyltri-L-glutamate. Residues His645, Cys647, and Glu669 each contribute to the Zn(2+) site. His698 functions as the Proton donor in the catalytic mechanism. Cys730 serves as a coordination point for Zn(2+).

It belongs to the vitamin-B12 independent methionine synthase family. It depends on Zn(2+) as a cofactor.

The enzyme catalyses 5-methyltetrahydropteroyltri-L-glutamate + L-homocysteine = tetrahydropteroyltri-L-glutamate + L-methionine. Its pathway is amino-acid biosynthesis; L-methionine biosynthesis via de novo pathway; L-methionine from L-homocysteine (MetE route): step 1/1. Catalyzes the transfer of a methyl group from 5-methyltetrahydrofolate to homocysteine resulting in methionine formation. In Coxiella burnetii (strain CbuK_Q154) (Coxiella burnetii (strain Q154)), this protein is 5-methyltetrahydropteroyltriglutamate--homocysteine methyltransferase.